Consider the following 449-residue polypeptide: UDP-N-acetylmuramoylalanine--D-glutamate ligase (449 aa).

118 to 124 (GTNGKTT) lines the ATP pocket.

This sequence belongs to the MurCDEF family.

It is found in the cytoplasm. The enzyme catalyses UDP-N-acetyl-alpha-D-muramoyl-L-alanine + D-glutamate + ATP = UDP-N-acetyl-alpha-D-muramoyl-L-alanyl-D-glutamate + ADP + phosphate + H(+). It functions in the pathway cell wall biogenesis; peptidoglycan biosynthesis. Cell wall formation. Catalyzes the addition of glutamate to the nucleotide precursor UDP-N-acetylmuramoyl-L-alanine (UMA). This is UDP-N-acetylmuramoylalanine--D-glutamate ligase from Staphylococcus aureus (strain MW2).